The primary structure comprises 491 residues: MRVSEPSDVVIRSDDTCHIHLTWSGSERRSAAKQHARKVAMKLGVSSGLIYLVGQPTVNWGDSDQPQPFRQRRYFYYLSGIDEPDCYLTYDIQADLLTLYVPDFDLRRAVWMGPTLTIEEAHKQSDVDRVNFFAALQHDLEWWTTKNKGTRPIYVLHDSQQPLIPSKRLWLDNERLLPAMNAARVIKDEYELRMIRQANYISGLAHRKILEDIHRMSTEAEIESSFLATCVSHGAKNQSYAIIAGSGENAAVLHYVKNNEPLDGRQLVCLDAGAEWRCYASDVTRTIPLWTDWPSERARNIYRVVEEMQEECIRRIRKGVRFRDLQLLAHDIAIKGLQKLDILTNDCTSAIYESGASAVFFPHGLGHHVGLEVHDVSKRPITALDGNQANWGNHNFVPLLTDSSWSVPLLDEGMVVTIEPGIYFNRLALLNAQNQPLAKYINFDEAEKYIPIGGVRIEDDILVTAKGYENLTTAPKGEEMLEIIRRGIDNS.

Positions 271, 282, 419, and 458 each coordinate Mn(2+).

This sequence belongs to the peptidase M24B family. It depends on Mn(2+) as a cofactor.

It carries out the reaction Release of any N-terminal amino acid, including proline, that is linked to proline, even from a dipeptide or tripeptide.. In terms of biological role, catalyzes the removal of a penultimate prolyl residue from the N-termini of peptides. The protein is Probable Xaa-Pro aminopeptidase AFLA_084750 of Aspergillus flavus (strain ATCC 200026 / FGSC A1120 / IAM 13836 / NRRL 3357 / JCM 12722 / SRRC 167).